The following is a 350-amino-acid chain: UDP-3-O-acylglucosamine N-acyltransferase (350 aa).

Catalysis depends on histidine 248, which acts as the Proton acceptor.

This sequence belongs to the transferase hexapeptide repeat family. LpxD subfamily. In terms of assembly, homotrimer.

It catalyses the reaction a UDP-3-O-[(3R)-3-hydroxyacyl]-alpha-D-glucosamine + a (3R)-hydroxyacyl-[ACP] = a UDP-2-N,3-O-bis[(3R)-3-hydroxyacyl]-alpha-D-glucosamine + holo-[ACP] + H(+). It functions in the pathway bacterial outer membrane biogenesis; LPS lipid A biosynthesis. Its function is as follows. Catalyzes the N-acylation of UDP-3-O-acylglucosamine using 3-hydroxyacyl-ACP as the acyl donor. Is involved in the biosynthesis of lipid A, a phosphorylated glycolipid that anchors the lipopolysaccharide to the outer membrane of the cell. The polypeptide is UDP-3-O-acylglucosamine N-acyltransferase (Nostoc punctiforme (strain ATCC 29133 / PCC 73102)).